Reading from the N-terminus, the 569-residue chain is Alpha-keto-acid decarboxylase (569 aa).

Glu-57 contacts thiamine diphosphate. Positions 392-474 are thiamine pyrophosphate binding; it reads TAFYGMVEHR…VVVNNDGYTI (83 aa). Mg(2+)-binding residues include Asp-442, Asn-469, and Gly-471.

It belongs to the TPP enzyme family. A metal cation serves as cofactor. The cofactor is thiamine diphosphate.

Its function is as follows. Decarboxylates branched-chain and aromatic alpha-keto acids to aldehydes. This is Alpha-keto-acid decarboxylase (kdc) from Mycobacterium leprae (strain TN).